Here is a 443-residue protein sequence, read N- to C-terminus: Xaa-Pro dipeptidase (443 aa).

Residues Asp246, Asp257, His339, Glu384, and Glu423 each contribute to the Mn(2+) site.

Belongs to the peptidase M24B family. Bacterial-type prolidase subfamily. Mn(2+) serves as cofactor.

It catalyses the reaction Xaa-L-Pro dipeptide + H2O = an L-alpha-amino acid + L-proline. Splits dipeptides with a prolyl residue in the C-terminal position. In Enterobacter sp. (strain 638), this protein is Xaa-Pro dipeptidase.